The primary structure comprises 142 residues: MKTFVAKPETVKRDWYVVDATGKTLGRLATELARRLRGKHKAEYTPHVDTGDYIIVINADKVAVTGRKETDKLYYWHTGYVGGIKQATFKEMIARRPEAVIEIAVKGMLPKGPLGRAMFRKLKVYAGGEHQHAAQQPQVLDI.

Belongs to the universal ribosomal protein uL13 family. Part of the 50S ribosomal subunit.

In terms of biological role, this protein is one of the early assembly proteins of the 50S ribosomal subunit, although it is not seen to bind rRNA by itself. It is important during the early stages of 50S assembly. This Haemophilus influenzae (strain PittGG) protein is Large ribosomal subunit protein uL13.